Here is a 254-residue protein sequence, read N- to C-terminus: D-aminoacyl-tRNA deacylase (254 aa).

The segment at 61–82 is disordered; it reads KPTLTVHTPGNLTDDNSHGGNP. Positions 65–74 are enriched in polar residues; sequence TVHTPGNLTD.

The protein belongs to the DtdA deacylase family. As to quaternary structure, monomer. The cofactor is Zn(2+).

It catalyses the reaction a D-aminoacyl-tRNA + H2O = a tRNA + a D-alpha-amino acid + H(+). The catalysed reaction is glycyl-tRNA(Ala) + H2O = tRNA(Ala) + glycine + H(+). In terms of biological role, D-aminoacyl-tRNA deacylase with broad substrate specificity. By recycling D-aminoacyl-tRNA to D-amino acids and free tRNA molecules, this enzyme counteracts the toxicity associated with the formation of D-aminoacyl-tRNA entities in vivo. The chain is D-aminoacyl-tRNA deacylase from Methanococcus maripaludis (strain DSM 14266 / JCM 13030 / NBRC 101832 / S2 / LL).